Consider the following 106-residue polypeptide: Malonate decarboxylase acyl carrier protein (106 aa).

O-(phosphoribosyl dephospho-coenzyme A)serine is present on S28.

The protein belongs to the MdcC family. In terms of processing, covalently binds the prosthetic group of malonate decarboxylase.

It is found in the cytoplasm. Its function is as follows. Subunit of malonate decarboxylase, it is an acyl carrier protein to which acetyl and malonyl thioester residues are bound via a 2'-(5''-phosphoribosyl)-3'-dephospho-CoA prosthetic group and turn over during the catalytic mechanism. The chain is Malonate decarboxylase acyl carrier protein from Stenotrophomonas maltophilia (strain K279a).